Here is a 274-residue protein sequence, read N- to C-terminus: Mitogen-activated protein kinase 4 (274 aa).

ATP-binding positions include 1–8 and Lys-23; that span reads GCGGNGLV. Residues 1 to 274 enclose the Protein kinase domain; that stretch reads GCGGNGLVLS…KILTFSPMDR (274 aa). Residue Asp-123 is the Proton acceptor of the active site. Ser-160 is modified (phosphoserine). The short motif at 160 to 162 is the SEG motif element; that stretch reads SEG.

This sequence belongs to the protein kinase superfamily. CMGC Ser/Thr protein kinase family. MAP kinase subfamily. Homodimer. Heterodimer with ERK3/MAPK6. Interacts with MAPKAPK5. The cofactor is Mg(2+). Phosphorylated by PAK1, PAK2 and PAK3 in the activation loop resulting in catalytic activation. Phosphorylated by MAPKAPK5 at other sites. Exclusively detected in the brain, where expression is restricted to the choroid plexus and hippocampus, and to a lesser extent in lung.

It localises to the cytoplasm. Its subcellular location is the nucleus. It catalyses the reaction L-seryl-[protein] + ATP = O-phospho-L-seryl-[protein] + ADP + H(+). It carries out the reaction L-threonyl-[protein] + ATP = O-phospho-L-threonyl-[protein] + ADP + H(+). With respect to regulation, activated by phosphorylation in the activation loop. Atypical MAPK protein. Phosphorylates microtubule-associated protein 2 (MAP2) and MAPKAPK5. The precise role of the complex formed with MAPKAPK5 is still unclear, but the complex follows a complex set of phosphorylation events: upon interaction with atypical MAPKAPK5, ERK4/MAPK4 is phosphorylated and then mediates phosphorylation and activation of MAPKAPK5, which in turn phosphorylates ERK4/MAPK4. May promote entry in the cell cycle. The polypeptide is Mitogen-activated protein kinase 4 (Mapk4) (Rattus norvegicus (Rat)).